Reading from the N-terminus, the 310-residue chain is Putative S-adenosyl-L-methionine-dependent methyltransferase MUL_2766 (310 aa).

S-adenosyl-L-methionine is bound by residues D131 and 160 to 161; that span reads DL.

This sequence belongs to the UPF0677 family.

In terms of biological role, exhibits S-adenosyl-L-methionine-dependent methyltransferase activity. The protein is Putative S-adenosyl-L-methionine-dependent methyltransferase MUL_2766 of Mycobacterium ulcerans (strain Agy99).